The following is a 226-amino-acid chain: MAKISKRFKEALSKVEKNKVYPLTQALDLAKQTSTTKFDSTVEVAFNLNIDPRKADQQIRGAVVLPAGTGKTQRVLVLTNTKTKEAEQAKADIVGGEELINRIKNENWFDFDIIVATPEMMAKLGAIGKILGPKGLMPNPKTGTVTIDVAKAVDDIKKRKVEYRADKEGNIHLIIGKVSFEIEKLEENFKAVIDEIRRVKPQTVKGDYIKNITLSTTMGPGIKVQF.

The protein belongs to the universal ribosomal protein uL1 family. As to quaternary structure, part of the 50S ribosomal subunit.

Functionally, binds directly to 23S rRNA. The L1 stalk is quite mobile in the ribosome, and is involved in E site tRNA release. Protein L1 is also a translational repressor protein, it controls the translation of the L11 operon by binding to its mRNA. This Mycoplasma mycoides subsp. mycoides SC (strain CCUG 32753 / NCTC 10114 / PG1) protein is Large ribosomal subunit protein uL1.